The sequence spans 421 residues: Putative B3 domain-containing protein Os08g0333500 (421 aa).

The segment at residues 1–51 is a DNA-binding region (TF-B3); it reads MTVELEKIAGSFFISKGWKTFVHRTGLLSGQYIRFQVLTPSKINVLLFDKK. The interval 92-121 is disordered; that stretch reads SHTSNKETSSDSRTESMTDIPSSSDNSGET. A compositionally biased stretch (basic and acidic residues) spans 95-107; it reads SNKETSSDSRTES. Residues 108–121 show a composition bias toward polar residues; that stretch reads MTDIPSSSDNSGET.

It localises to the nucleus. This chain is Putative B3 domain-containing protein Os08g0333500, found in Oryza sativa subsp. japonica (Rice).